Here is a 424-residue protein sequence, read N- to C-terminus: Homeobox-containing protein 1 (424 aa).

In terms of domain architecture, HNF-p1 spans 1-30 (MLFTIEQLELIKKLQHTGMSSDQLLKAFGE). The POU-specific atypical domain maps to 103–199 (SQRTPMKEIT…PNKLAAFLAD (97 aa)). The segment at residues 215 to 291 (QRRERYVFRP…NKRKELRRRS (77 aa)) is a DNA-binding region (homeobox). Positions 291–345 (SAEASAASTSSASSSASSTANHDSVSVSSMSPRDEETSSRNTTPETAISPSPAVS) are disordered. A compositionally biased stretch (low complexity) spans 293-310 (EASAASTSSASSSASSTA). 2 stretches are compositionally biased toward polar residues: residues 311–321 (NHDSVSVSSMS) and 329–345 (SRNT…PAVS).

This sequence belongs to the HMBOX1 homeobox family. Expressed in both AWC neurons. Also expressed in the FLP mechanosensory neurons.

The protein resides in the nucleus. Transcriptional repressor which maintains cell fate asymmetry of AWC neurons in adults by repressing the expression of multiple AWC (OFF) genes, including srsx-3 in the AWC (ON) neuron. The polypeptide is Homeobox-containing protein 1 (Caenorhabditis elegans).